The chain runs to 139 residues: uncharacterized protein (139 aa).

Residues 1–116 are disordered; it reads MYNPWQVGAS…TRPRVVARGK (116 aa). 2 stretches are compositionally biased toward low complexity: residues 50 to 70 and 84 to 110; these read RPRP…GPRP and LPAY…TRPR.

This is an uncharacterized protein from Homo sapiens (Human).